A 945-amino-acid chain; its full sequence is Nonsense-mediated mRNA decay factor SMG8 (945 aa).

Disordered stretches follow at residues 563 to 604 (RAEP…SANE) and 633 to 671 (AEAEVEEAEVCDKGSQDNSTSSDTSTESEIELQPKERSA).

The protein belongs to the SMG8 family.

Its function is as follows. Involved in nonsense-mediated decay (NMD) of mRNAs containing premature stop codons. Probable component of kinase complex containing nonC and recruited to stalled ribosomes. This chain is Nonsense-mediated mRNA decay factor SMG8, found in Drosophila grimshawi (Hawaiian fruit fly).